A 375-amino-acid polypeptide reads, in one-letter code: Hemolysin BL-binding component (375 aa).

The N-terminal stretch at 1–31 (MIKKIPYKLLAVSTLLTITTANVVSPVATFA) is a signal peptide. Residues 232–252 (FNVMKGAILGLPIIGGIIVGV) traverse the membrane as a helical segment.

Composed of a binding component, B, and two lytic components, L1 and L2. All three subunits act synergically to cause hemolysis.

It localises to the secreted. It is found in the host cell membrane. In terms of biological role, cytotoxic protein, part of the enterotoxin complex. Responsible for binding to erythrocytes. This enterotoxin is thought to be the cause of the diarrheal form of gastroenteritis caused by food-borne strains of B.cereus. This is Hemolysin BL-binding component (hblA) from Bacillus cereus.